A 136-amino-acid chain; its full sequence is Biopolymer transport protein exbD2 (136 aa).

At 1–23 (MAFSTGGNRGPMADINVTPLVDV) the chain is on the cytoplasmic side. A helical membrane pass occupies residues 24–44 (MLVLLIIFIVTAPIMTYPIAV). Residues 45 to 136 (DLPQRVLNPP…SQMKKIGFMQ (92 aa)) lie on the Periplasmic side of the membrane.

This sequence belongs to the ExbD/TolR family. As to quaternary structure, the accessory proteins ExbB and ExbD seem to form a complex with TonB.

It localises to the cell inner membrane. Functionally, involved in the TonB-dependent energy-dependent transport of various receptor-bound substrates. This is Biopolymer transport protein exbD2 (exbD2) from Xanthomonas campestris pv. campestris (strain ATCC 33913 / DSM 3586 / NCPPB 528 / LMG 568 / P 25).